A 207-amino-acid polypeptide reads, in one-letter code: uncharacterized protein (207 aa).

5 helical membrane-spanning segments follow: residues 28–48 (IAVL…IVFV), 59–79 (EGFI…FLIV), 112–132 (MFLL…VAGL), 140–160 (FILA…FIGY), and 165–185 (LITQ…LWYV).

It localises to the cell membrane. This is an uncharacterized protein from Bacillus subtilis (strain 168).